The primary structure comprises 391 residues: DNA-directed RNA polymerase subunit Rpo1C (391 aa).

The protein belongs to the RNA polymerase beta' chain family. Part of the RNA polymerase complex.

It is found in the cytoplasm. The protein localises to the chromosome. It carries out the reaction RNA(n) + a ribonucleoside 5'-triphosphate = RNA(n+1) + diphosphate. Its function is as follows. DNA-dependent RNA polymerase (RNAP) catalyzes the transcription of DNA into RNA using the four ribonucleoside triphosphates as substrates. Forms part of the jaw domain. In Thermococcus kodakarensis (strain ATCC BAA-918 / JCM 12380 / KOD1) (Pyrococcus kodakaraensis (strain KOD1)), this protein is DNA-directed RNA polymerase subunit Rpo1C.